The chain runs to 351 residues: Peptide chain release factor 1 (351 aa).

Gln-230 carries the N5-methylglutamine modification.

This sequence belongs to the prokaryotic/mitochondrial release factor family. Post-translationally, methylated by PrmC. Methylation increases the termination efficiency of RF1.

It is found in the cytoplasm. Functionally, peptide chain release factor 1 directs the termination of translation in response to the peptide chain termination codons UAG and UAA. The polypeptide is Peptide chain release factor 1 (Onion yellows phytoplasma (strain OY-M)).